The sequence spans 834 residues: DNA gyrase subunit A (834 aa).

A Topo IIA-type catalytic domain is found at leucine 53–leucine 520. Tyrosine 141 functions as the O-(5'-phospho-DNA)-tyrosine intermediate in the catalytic mechanism. The short motif at glutamine 547 to glycine 553 is the GyrA-box element.

This sequence belongs to the type II topoisomerase GyrA/ParC subunit family. Heterotetramer, composed of two GyrA and two GyrB chains. In the heterotetramer, GyrA contains the active site tyrosine that forms a transient covalent intermediate with DNA, while GyrB binds cofactors and catalyzes ATP hydrolysis.

The protein localises to the cytoplasm. It catalyses the reaction ATP-dependent breakage, passage and rejoining of double-stranded DNA.. Functionally, a type II topoisomerase that negatively supercoils closed circular double-stranded (ds) DNA in an ATP-dependent manner to modulate DNA topology and maintain chromosomes in an underwound state. Negative supercoiling favors strand separation, and DNA replication, transcription, recombination and repair, all of which involve strand separation. Also able to catalyze the interconversion of other topological isomers of dsDNA rings, including catenanes and knotted rings. Type II topoisomerases break and join 2 DNA strands simultaneously in an ATP-dependent manner. The sequence is that of DNA gyrase subunit A from Brachyspira hyodysenteriae (strain ATCC 49526 / WA1).